The following is a 110-amino-acid chain: Auxin-responsive protein SAUR71 (110 aa).

Belongs to the ARG7 family. In terms of tissue distribution, highly expressed in the steles of roots and hypocotyls.

It localises to the cytoplasm. Its function is as follows. Plays a role in the regulation of cell expansion, root meristem patterning and auxin transport. This is Auxin-responsive protein SAUR71 from Arabidopsis thaliana (Mouse-ear cress).